We begin with the raw amino-acid sequence, 1214 residues long: NBPF family member NBPF1 (1214 aa).

A coiled-coil region spans residues 70–128; the sequence is MLRNERQFKEEKLAEQLKQAEELRQYKVLVHSQERELTQLREKLREGRDASRSLNQHLQ. The segment at 162–200 is disordered; the sequence is LSPENDEDEDEDVQVEEAEKVLESSAPREVQKAEESKVP. Residues 165–177 are compositionally biased toward acidic residues; that stretch reads ENDEDEDEDVQVE. Residues 165–259 form the Olduvai 1 domain; sequence ENDEDEDEDV…ECQDAVNILP (95 aa). The span at 190–200 shows a compositional bias: basic and acidic residues; it reads EVQKAEESKVP. Residues 292–399 adopt a coiled-coil conformation; that stretch reads NEKLHPQLAE…ASRSLNQHLQ (108 aa). Positions 433-471 are disordered; sequence LSPENDEDEDEDVQVEEAEKVLESSAPREVQKAEESKVP. A compositionally biased stretch (acidic residues) spans 436–448; the sequence is ENDEDEDEDVQVE. Residues 436-530 form the Olduvai 2 domain; that stretch reads ENDEDEDEDV…ECQDAVNILP (95 aa). The span at 461–471 shows a compositional bias: basic and acidic residues; that stretch reads EVQKAEESKVP. Residues 610–670 are a coiled coil; the sequence is KSMLRNERQF…ASCSLNQHLQ (61 aa). 6 Olduvai domains span residues 707–799, 800–888, 891–946, 947–1038, 1041–1114, and 1116–1214; these read ENDN…HIIP, ENES…ATGP, SREL…LDMD, EIEK…PPCP, SREL…RSTK, and RRRR…IFPQ. Disordered regions lie at residues 722-746 and 791-837; these read EKVQKSSAPREMPKAEEKEVPEDSL and WEDA…EGYS. Composition is skewed to acidic residues over residues 801–810 and 821–833; these read NESDDEEEEE and ESEEEEVPQESWD. Residues 1102–1121 are compositionally biased toward basic residues; sequence GKGKKRRGRRSTKKRRRRGR. The disordered stretch occupies residues 1102–1136; that stretch reads GKGKKRRGRRSTKKRRRRGRKEGEEDQNPPCPRLS.

This sequence belongs to the NBPF family. As to expression, widely expressed. The only tissue which shows a weak expression is kidney.

The protein localises to the cytoplasm. The protein is NBPF family member NBPF1 of Homo sapiens (Human).